A 47-amino-acid chain; its full sequence is PhoP/PhoQ regulator MgrB (47 aa).

The helical transmembrane segment at 6–26 (WVILIIVALVCLLLWAQVFNI) threads the bilayer.

It belongs to the MgrB family. In terms of assembly, may form homooligomers. Probably interacts with the periplasmic domain of PhoQ.

Its subcellular location is the cell inner membrane. In terms of biological role, phoP-regulated transcription is redox-sensitive, being activated when the periplasm becomes more reducing. MgrB acts between DsbA/DsbB and PhoP/PhoQ in this pathway. Represses PhoP/PhoQ signaling, possibly by binding to the periplasmic domain of PhoQ, altering its activity and that of downstream effector PhoP. The sequence is that of PhoP/PhoQ regulator MgrB from Citrobacter koseri (strain ATCC BAA-895 / CDC 4225-83 / SGSC4696).